We begin with the raw amino-acid sequence, 366 residues long: Histidinol-phosphate aminotransferase 1 (366 aa).

Residue lysine 226 is modified to N6-(pyridoxal phosphate)lysine.

It belongs to the class-II pyridoxal-phosphate-dependent aminotransferase family. Histidinol-phosphate aminotransferase subfamily. In terms of assembly, homodimer. It depends on pyridoxal 5'-phosphate as a cofactor.

The catalysed reaction is L-histidinol phosphate + 2-oxoglutarate = 3-(imidazol-4-yl)-2-oxopropyl phosphate + L-glutamate. It participates in amino-acid biosynthesis; L-histidine biosynthesis; L-histidine from 5-phospho-alpha-D-ribose 1-diphosphate: step 7/9. In Mannheimia succiniciproducens (strain KCTC 0769BP / MBEL55E), this protein is Histidinol-phosphate aminotransferase 1.